The following is a 402-amino-acid chain: MKRFISAWNRTSLIKRIAIGVVIGAILGLLIPKITVIGLLGDMFVGGLKAIAPLLVSALVANALSQTREGQQSNMKTIIVLYLFGTFAAALTAVISHYIFPISLKLGAASATKAAAPQGVGEVFKDLMLKMVDNPINALSQANYIGVLVWSVVFGFAMRTASEHTKELLHTLAEVTSQIVRWIINLAPFGILGLVFDTISKNGVGVLADYGVLILVLVGTMTFVALVINPIIAFVMMGKNPFPLVFRCLKDSGITAFFTRSSAANIPVNLQLCEDLGLNPDTYSVSIPLGSTINMAGAAVTINVLTLAAVTTLGIEVDFATAFILSVVSTISACGASGIAGGSLLLVPVACSLFGISNDLAMQVVGVGFIVGVIQDSCETALNSSTDVLFTAVAEKSRWKKS.

A run of 8 helical transmembrane segments spans residues 17–37 (IAIG…ITVI), 44–64 (FVGG…ANAL), 78–98 (IIVL…ISHY), 138–158 (ALSQ…GFAM), 179–199 (IVRW…FDTI), 212–232 (VLIL…NPII), 295–315 (MAGA…TLGI), and 336–356 (ASGI…LFGI).

It belongs to the dicarboxylate/amino acid:cation symporter (DAACS) (TC 2.A.23) family.

It localises to the cell membrane. It carries out the reaction L-serine(in) + Na(+)(in) = L-serine(out) + Na(+)(out). The catalysed reaction is L-threonine(in) + Na(+)(in) = L-threonine(out) + Na(+)(out). Involved in the import of serine and threonine into the cell, with the concomitant import of sodium (symport system). The sequence is that of Serine/threonine transporter SstT from Streptococcus thermophilus (strain ATCC BAA-250 / LMG 18311).